A 515-amino-acid chain; its full sequence is 2-isopropylmalate synthase (515 aa).

The 263-residue stretch at 5-267 (VIIFDTTLRD…DTRINTQEIH (263 aa)) folds into the Pyruvate carboxyltransferase domain. Asp-14, His-202, His-204, and Asn-238 together coordinate Mn(2+). A regulatory domain region spans residues 392 to 515 (VLDKLSAHST…VADIKNHKHH (124 aa)).

The protein belongs to the alpha-IPM synthase/homocitrate synthase family. LeuA type 1 subfamily. Homodimer. Requires Mn(2+) as cofactor.

It is found in the cytoplasm. The enzyme catalyses 3-methyl-2-oxobutanoate + acetyl-CoA + H2O = (2S)-2-isopropylmalate + CoA + H(+). It functions in the pathway amino-acid biosynthesis; L-leucine biosynthesis; L-leucine from 3-methyl-2-oxobutanoate: step 1/4. Its function is as follows. Catalyzes the condensation of the acetyl group of acetyl-CoA with 3-methyl-2-oxobutanoate (2-ketoisovalerate) to form 3-carboxy-3-hydroxy-4-methylpentanoate (2-isopropylmalate). In Haemophilus influenzae (strain PittEE), this protein is 2-isopropylmalate synthase.